The primary structure comprises 186 residues: ATP synthase subunit b (186 aa).

Residues 25–45 (IVWSVVCVAIIAVVFYKYVIP) traverse the membrane as a helical segment.

This sequence belongs to the ATPase B chain family. As to quaternary structure, F-type ATPases have 2 components, F(1) - the catalytic core - and F(0) - the membrane proton channel. F(1) has five subunits: alpha(3), beta(3), gamma(1), delta(1), epsilon(1). F(0) has three main subunits: a(1), b(2) and c(10-14). The alpha and beta chains form an alternating ring which encloses part of the gamma chain. F(1) is attached to F(0) by a central stalk formed by the gamma and epsilon chains, while a peripheral stalk is formed by the delta and b chains.

Its subcellular location is the cell membrane. F(1)F(0) ATP synthase produces ATP from ADP in the presence of a proton or sodium gradient. F-type ATPases consist of two structural domains, F(1) containing the extramembraneous catalytic core and F(0) containing the membrane proton channel, linked together by a central stalk and a peripheral stalk. During catalysis, ATP synthesis in the catalytic domain of F(1) is coupled via a rotary mechanism of the central stalk subunits to proton translocation. Functionally, component of the F(0) channel, it forms part of the peripheral stalk, linking F(1) to F(0). The sequence is that of ATP synthase subunit b from Nocardia farcinica (strain IFM 10152).